The primary structure comprises 903 residues: Calcium-activated chloride channel regulator 1 (903 aa).

The N-terminal stretch at 1 to 21 (MVPRLTVILFLTLHLLPGMKS) is a signal peptide. Residues 45 to 199 (DEKLIQNIKE…HITGTNVIVK (155 aa)) are metalloprotease domain. Zn(2+) is bound at residue H155. E156 is an active-site residue. Positions 159 and 166 each coordinate Zn(2+). The VWFA domain occupies 308-476 (VVCLVLDKSG…NGLTNAFSRI (169 aa)). N-linked (GlcNAc...) asparagine glycans are attached at residues N360, N372, N504, and N842. The chain crosses the membrane as a helical span at residues 883–903 (GTKISAINLAIFALAMILSIV).

Belongs to the CLCR family. Post-translationally, glycosylated. The 125-kDa product is autoproteolytically processed by the metalloprotease domain and yields to two cell-surface-associated subunits, a 90-kDa protein and a group of 37- to 41-kDa proteins. The cleavage is necessary for calcium-activated chloride channel (CaCC) activation activity. As to expression, trachea.

It localises to the apical cell membrane. Functionally, may be involved in mediating calcium-activated chloride conductance. May play critical roles in goblet cell metaplasia, mucus hypersecretion, cystic fibrosis and AHR. May be involved in the regulation of mucus production and/or secretion by goblet cells. Involved in the regulation of tissue inflammation in the innate immune response. May play a role as a tumor suppressor. Induces MUC5AC. The chain is Calcium-activated chloride channel regulator 1 from Bos taurus (Bovine).